Reading from the N-terminus, the 213-residue chain is Ripening-related protein 3 (213 aa).

An N-terminal signal peptide occupies residues 1-32; that stretch reads MAGAMTMSRRRLSHALLLVLAILPNLAALAVA.

Belongs to the kiwellin family.

The protein localises to the secreted. The sequence is that of Ripening-related protein 3 from Oryza sativa subsp. japonica (Rice).